The sequence spans 177 residues: Acetyltransferase (177 aa).

The N-acetyltransferase domain occupies 4 to 174 (AQLRRVTAES…PTAIYFKTLG (171 aa)). Acetyl-CoA is bound by residues glutamate 27, 96-98 (LMV), 104-109 (GRGLGR), 130-131 (DT), and tyrosine 141.

Its function is as follows. Renders tabtoxin-producing pathogens tolerant to their own phytotoxins. The polypeptide is Acetyltransferase (ttr) (Pseudomonas amygdali pv. tabaci (Pseudomonas syringae pv. tabaci)).